The following is a 166-amino-acid chain: MAEQKGMDPDTKYIKLQVVGGEVPGATLAQRVGPLGLSSKVVGEDIKKATADYKSLKVHVQLAIKDRKATVEVQPSVATLIIKSLKEPPRDRKKEKNILHNGSLRMTEVVDIARIARSSRSYSNSLSGTVKEVLGTCKSIGCKVDGKCPKEVTREIDAGEIKLPDQ.

Position 67 is an N5-methylarginine (arginine 67).

Belongs to the universal ribosomal protein uL11 family.

This is Large ribosomal subunit protein uL11 (RPL12) from Encephalitozoon cuniculi (strain GB-M1) (Microsporidian parasite).